Reading from the N-terminus, the 23-residue chain is Caerin-4.2 (23 aa).

As to expression, expressed by the skin parotoid and/or rostral glands.

The protein localises to the secreted. Antibacterial peptide, that adopts an alpha helical conformation which can disrupt bacterial membranes. Each caerin displays a different antimicrobial specificity. The protein is Caerin-4.2 of Ranoidea caerulea (Green tree frog).